A 1034-amino-acid chain; its full sequence is Glycine dehydrogenase (decarboxylating) B, mitochondrial (1034 aa).

The transit peptide at 1–63 (MERARRLAIL…LNGFGSQVRT (63 aa)) directs the protein to the mitochondrion. Lys-770 is modified (N6-(pyridoxal phosphate)lysine).

Belongs to the GcvP family. In terms of assembly, homodimer. The glycine cleavage system is composed of four proteins: P, T, L and H. It depends on pyridoxal 5'-phosphate as a cofactor.

Its subcellular location is the mitochondrion. It carries out the reaction N(6)-[(R)-lipoyl]-L-lysyl-[glycine-cleavage complex H protein] + glycine + H(+) = N(6)-[(R)-S(8)-aminomethyldihydrolipoyl]-L-lysyl-[glycine-cleavage complex H protein] + CO2. In terms of biological role, the glycine cleavage system catalyzes the degradation of glycine. The P protein binds the alpha-amino group of glycine through its pyridoxal phosphate cofactor; CO(2) is released and the remaining methylamine moiety is then transferred to the lipoamide cofactor of the H protein. This Flaveria pringlei protein is Glycine dehydrogenase (decarboxylating) B, mitochondrial (GDCSPB).